We begin with the raw amino-acid sequence, 323 residues long: Cobalamin biosynthesis protein CobD (323 aa).

A run of 5 helical transmembrane segments spans residues 52–72 (IAGVLLLALTVTSAASVTWLM), 73–93 (VWGSARLHALAGLMVAALLSS), 154–174 (DGIIAPLFWLALGGPVAGMAF), 214–234 (ALLMVMVAPLIGLSQANAASI), and 294–314 (IRLMYATTLAMAVISLATAAL).

The protein belongs to the CobD/CbiB family.

The protein resides in the cell membrane. The protein operates within cofactor biosynthesis; adenosylcobalamin biosynthesis. Functionally, converts cobyric acid to cobinamide by the addition of aminopropanol on the F carboxylic group. The polypeptide is Cobalamin biosynthesis protein CobD (Pelobacter propionicus (strain DSM 2379 / NBRC 103807 / OttBd1)).